We begin with the raw amino-acid sequence, 205 residues long: MKVPFVNFMISSFPAAVLVGAVVGFMIGRKYSVADASRGYSSKNANKASNPEKESPVSVSNDEDSESETELLDMLKGNSSLAALALAEGQTKMVLVVRTDLGMTKGKIAAQCAHAALACYKIASAVDPDLVRIWENAGQAKITLQAQTEETLELLQAQAMSLGLCARVIHDAGRTQIASGSATVLGIGPGPVSVINEVTGSLKLF.

Polar residues predominate over residues 40-49; sequence YSSKNANKAS. Positions 40–68 are disordered; it reads YSSKNANKASNPEKESPVSVSNDEDSESE. Serine 65 and serine 79 each carry phosphoserine.

It belongs to the PTH2 family.

The enzyme catalyses an N-acyl-L-alpha-aminoacyl-tRNA + H2O = an N-acyl-L-amino acid + a tRNA + H(+). Functionally, the natural substrate for this enzyme may be peptidyl-tRNAs which drop off the ribosome during protein synthesis. The polypeptide is Probable peptidyl-tRNA hydrolase 2 (Schizosaccharomyces pombe (strain 972 / ATCC 24843) (Fission yeast)).